The following is a 232-amino-acid chain: Uracil-DNA glycosylase (232 aa).

Residue D71 is the Proton acceptor of the active site.

The protein belongs to the uracil-DNA glycosylase (UDG) superfamily. UNG family.

It localises to the cytoplasm. The catalysed reaction is Hydrolyzes single-stranded DNA or mismatched double-stranded DNA and polynucleotides, releasing free uracil.. Its function is as follows. Excises uracil residues from the DNA which can arise as a result of misincorporation of dUMP residues by DNA polymerase or due to deamination of cytosine. This is Uracil-DNA glycosylase from Azotobacter vinelandii (strain DJ / ATCC BAA-1303).